We begin with the raw amino-acid sequence, 339 residues long: DNA-directed RNA polymerase subunit alpha (339 aa).

Residues 1–233 (MVREEVAGST…DLFLPFLHAE (233 aa)) are alpha N-terminal domain (alpha-NTD). An alpha C-terminal domain (alpha-CTD) region spans residues 266 to 339 (GIPLNCIFID…IDLLKNKLSF (74 aa)).

The protein belongs to the RNA polymerase alpha chain family. In plastids the minimal PEP RNA polymerase catalytic core is composed of four subunits: alpha, beta, beta', and beta''. When a (nuclear-encoded) sigma factor is associated with the core the holoenzyme is formed, which can initiate transcription.

The protein localises to the plastid. It localises to the chloroplast. The catalysed reaction is RNA(n) + a ribonucleoside 5'-triphosphate = RNA(n+1) + diphosphate. Functionally, DNA-dependent RNA polymerase catalyzes the transcription of DNA into RNA using the four ribonucleoside triphosphates as substrates. This chain is DNA-directed RNA polymerase subunit alpha, found in Psathyrostachys juncea (Russian wildrye).